We begin with the raw amino-acid sequence, 550 residues long: Solute carrier family 22 member 6 (550 aa).

Over 1–9 (MAFNDLLQQ) the chain is Cytoplasmic. Residues 10–30 (VGGVGRFQQIQVTLVVLPLLL) traverse the membrane as a helical segment. The Extracellular portion of the chain corresponds to 31–135 (MASHNTVQNF…LVCSHRALRQ (105 aa)). Asn56, Asn92, and Asn113 each carry an N-linked (GlcNAc...) asparagine glycan. Residues 136-156 (LAQSLYMVGVLLGAMVFGYLA) form a helical membrane-spanning segment. At 157 to 164 (DRLGRRKV) the chain is on the cytoplasmic side. The helical transmembrane segment at 165 to 187 (LILNYLQTAVSGTCAAFAPNFPI) threads the bilayer. Residues 188-190 (YCA) lie on the Extracellular side of the membrane. A helical membrane pass occupies residues 191-213 (FRLLSGMSLAGIALNCMTLNVEW). The Cytoplasmic segment spans residues 214–224 (MPIHTRACVGT). Residues 225 to 245 (LIGYVYSLGQFLLAGVAYAVP) traverse the membrane as a helical segment. The Extracellular portion of the chain corresponds to 246 to 248 (HWR). The helical transmembrane segment at 249-269 (HLQLLISVPFFAFFIYSWFFI) threads the bilayer. Residues 270-337 (ESARWHSSSG…ELLRCPTLRH (68 aa)) are Cytoplasmic-facing. Residues 338-358 (LFLCLSMLWFATSFAYYGLVM) form a helical membrane-spanning segment. Topologically, residues 359-368 (DLQGFGVSIY) are extracellular. A helical transmembrane segment spans residues 369-389 (LIQVIFGAVDLPAKLVGFLVI). The Cytoplasmic segment spans residues 390 to 395 (NSLGRR). A helical transmembrane segment spans residues 396-416 (PAQMAALLLAGICILLNGVVP). Topologically, residues 417-425 (QDQSVIRTS) are extracellular. Residues 426–446 (LAVLGKGCLAASFNCIFLYTG) form a helical membrane-spanning segment. Over 447–456 (ELYPTMIRQT) the chain is Cytoplasmic. Residues 457–477 (GLGMGSTMARVGSIVSPLVSM) traverse the membrane as a helical segment. Topologically, residues 478 to 484 (TTELYPS) are extracellular. The helical transmembrane segment at 485 to 505 (VPLFIYGAVPVAASAVTVLLP) threads the bilayer. Residues 506-550 (ETLGQPLPDTVQDLESRKGKQTPQQQEHQKYMVPLQASAQEKNGL) are Cytoplasmic-facing. A disordered region spans residues 513–550 (PDTVQDLESRKGKQTPQQQEHQKYMVPLQASAQEKNGL).

It belongs to the major facilitator (TC 2.A.1) superfamily. Organic cation transporter (TC 2.A.1.19) family. Post-translationally, glycosylated. Glycosylation is necessary for proper targeting of the transporter to the plasma membrane. In terms of tissue distribution, expressed in kidney; in the basolateral membrane of the proximal tubule.

The protein localises to the basolateral cell membrane. The protein resides in the basal cell membrane. It catalyses the reaction (6R)-L-erythro-5,6,7,8-tetrahydrobiopterin(out) + a dicarboxylate(in) = (6R)-L-erythro-5,6,7,8-tetrahydrobiopterin(in) + a dicarboxylate(out). It carries out the reaction L-erythro-7,8-dihydrobiopterin(out) + a dicarboxylate(in) = L-erythro-7,8-dihydrobiopterin(in) + a dicarboxylate(out). The catalysed reaction is L-sepiapterin(out) + a dicarboxylate(in) = L-sepiapterin(in) + a dicarboxylate(out). The enzyme catalyses prostaglandin F2alpha(out) + a dicarboxylate(in) = prostaglandin F2alpha(in) + a dicarboxylate(out). It catalyses the reaction prostaglandin E2(out) + a dicarboxylate(in) = prostaglandin E2(in) + a dicarboxylate(out). It carries out the reaction 3',5'-cyclic AMP(out) + a dicarboxylate(in) = 3',5'-cyclic AMP(in) + a dicarboxylate(out). The catalysed reaction is 3',5'-cyclic GMP(out) + a dicarboxylate(in) = 3',5'-cyclic GMP(in) + a dicarboxylate(out). The enzyme catalyses urate(out) + a dicarboxylate(in) = urate(in) + a dicarboxylate(out). It catalyses the reaction kynurenate(out) + glutarate(in) = kynurenate(in) + glutarate(out). It carries out the reaction (indol-3-yl)acetate(out) + a dicarboxylate(in) = (indol-3-yl)acetate(in) + a dicarboxylate(out). The catalysed reaction is indoxyl sulfate(out) + a dicarboxylate(in) = indoxyl sulfate(in) + a dicarboxylate(out). The enzyme catalyses N-benzoylglycine(out) + a dicarboxylate(in) = N-benzoylglycine(in) + a dicarboxylate(out). It catalyses the reaction 3-carboxy-4-methyl-5-propyl-2-furanpropanoate(out) + a dicarboxylate(in) = 3-carboxy-4-methyl-5-propyl-2-furanpropanoate(in) + a dicarboxylate(out). Its function is as follows. Secondary active transporter that functions as a Na(+)-independent organic anion (OA)/dicarboxylate antiporter where the uptake of one molecule of OA into the cell is coupled with an efflux of one molecule of intracellular dicarboxylate such as 2-oxoglutarate or glutarate. Mediates the uptake of OA across the basolateral side of proximal tubule epithelial cells, thereby contributing to the renal elimination of endogenous OA from the systemic circulation into the urine. Functions as a biopterin transporters involved in the uptake and the secretion of coenzymes tetrahydrobiopterin (BH4), dihydrobiopterin (BH2) and sepiapterin to urine, thereby determining baseline levels of blood biopterins. Transports prostaglandin E2 (PGE2) and prostaglandin F2-alpha (PGF2-alpha) and may contribute to their renal excretion. Also mediates the uptake of cyclic nucleotides such as cAMP and cGMP. Involved in the transport of neuroactive tryptophan metabolites kynurenate (KYNA) and xanthurenate (XA) and may contribute to their secretion from the brain. May transport glutamate. Also involved in the disposition of uremic toxins and potentially toxic xenobiotics by the renal organic anion secretory pathway, helping reduce their undesired toxicological effects on the body. Uremic toxins include the indoxyl sulfate (IS), hippurate/N-benzoylglycine (HA), indole acetate (IA), 3-carboxy-4- methyl-5-propyl-2-furanpropionate (CMPF) and urate. Xenobiotics include the mycotoxin ochratoxin (OTA). May also contribute to the transport of organic compounds in testes across the blood-testis-barrier. In Macaca fascicularis (Crab-eating macaque), this protein is Solute carrier family 22 member 6.